We begin with the raw amino-acid sequence, 75 residues long: Probable [Fe-S]-dependent transcriptional repressor (75 aa).

Iron-sulfur cluster is bound by residues Cys-55, Cys-60, Cys-63, and Cys-72.

The protein belongs to the FeoC family.

In terms of biological role, may function as a transcriptional regulator that controls feoABC expression. The polypeptide is Probable [Fe-S]-dependent transcriptional repressor (Serratia marcescens).